The chain runs to 78 residues: Conotoxin 5 (78 aa).

The N-terminal stretch at 1–22 is a signal peptide; sequence MKLTCMMIVTVLFLTAWIFITA. A propeptide spanning residues 23–49 is cleaved from the precursor; that stretch reads DNSRNGIENLPRMRRHEMKNPKASKLN. Disulfide bonds link Cys53–Cys69, Cys60–Cys73, and Cys68–Cys77.

Belongs to the conotoxin O1 superfamily. As to expression, expressed by the venom duct.

It is found in the secreted. The chain is Conotoxin 5 from Conus imperialis (Imperial cone).